Consider the following 100-residue polypeptide: Aspartyl/glutamyl-tRNA(Asn/Gln) amidotransferase subunit C (100 aa).

It belongs to the GatC family. As to quaternary structure, heterotrimer of A, B and C subunits.

The enzyme catalyses L-glutamyl-tRNA(Gln) + L-glutamine + ATP + H2O = L-glutaminyl-tRNA(Gln) + L-glutamate + ADP + phosphate + H(+). It catalyses the reaction L-aspartyl-tRNA(Asn) + L-glutamine + ATP + H2O = L-asparaginyl-tRNA(Asn) + L-glutamate + ADP + phosphate + 2 H(+). Allows the formation of correctly charged Asn-tRNA(Asn) or Gln-tRNA(Gln) through the transamidation of misacylated Asp-tRNA(Asn) or Glu-tRNA(Gln) in organisms which lack either or both of asparaginyl-tRNA or glutaminyl-tRNA synthetases. The reaction takes place in the presence of glutamine and ATP through an activated phospho-Asp-tRNA(Asn) or phospho-Glu-tRNA(Gln). The protein is Aspartyl/glutamyl-tRNA(Asn/Gln) amidotransferase subunit C of Rickettsia felis (strain ATCC VR-1525 / URRWXCal2) (Rickettsia azadi).